The primary structure comprises 394 residues: GDSL esterase/lipase At2g27360 (394 aa).

A signal peptide spans 1–24; it reads MASQDCHMLLSFFISTFLITVVTS. The active-site Nucleophile is the Ser40. N-linked (GlcNAc...) asparagine glycans are attached at residues Asn136 and Asn319. Residues Asp344 and His347 contribute to the active site. Asn371 and Asn382 each carry an N-linked (GlcNAc...) asparagine glycan.

Belongs to the 'GDSL' lipolytic enzyme family.

The protein localises to the secreted. This is GDSL esterase/lipase At2g27360 from Arabidopsis thaliana (Mouse-ear cress).